Reading from the N-terminus, the 583-residue chain is Protein FMP25, mitochondrial (583 aa).

A mitochondrion-targeting transit peptide spans 1 to 25 (MSFRLFTRTSQRLPRLNWVSPIRRY). The chain crosses the membrane as a helical span at residues 83–105 (AVGQGILILVVVGGLGTAYLRWP). RCC1 repeat units follow at residues 332 to 389 (KGQF…AIDK), 390 to 452 (TGEI…VTIR), 459 to 510 (DHHY…TETE), and 512 to 569 (ENEV…KEQR).

Its subcellular location is the mitochondrion membrane. This is Protein FMP25, mitochondrial (FMP25) from Saccharomyces cerevisiae (strain ATCC 204508 / S288c) (Baker's yeast).